Here is a 194-residue protein sequence, read N- to C-terminus: dTTP/UTP pyrophosphatase (194 aa).

Asp-77 acts as the Proton acceptor in catalysis.

The protein belongs to the Maf family. YhdE subfamily. The cofactor is a divalent metal cation.

It localises to the cytoplasm. It carries out the reaction dTTP + H2O = dTMP + diphosphate + H(+). The enzyme catalyses UTP + H2O = UMP + diphosphate + H(+). Functionally, nucleoside triphosphate pyrophosphatase that hydrolyzes dTTP and UTP. May have a dual role in cell division arrest and in preventing the incorporation of modified nucleotides into cellular nucleic acids. The sequence is that of dTTP/UTP pyrophosphatase from Flavobacterium johnsoniae (strain ATCC 17061 / DSM 2064 / JCM 8514 / BCRC 14874 / CCUG 350202 / NBRC 14942 / NCIMB 11054 / UW101) (Cytophaga johnsonae).